Here is a 217-residue protein sequence, read N- to C-terminus: Probable GTP-binding protein EngB (217 aa).

Positions 37-214 (DGVEIAFAGR…RAAMAKLLEE (178 aa)) constitute an EngB-type G domain. GTP contacts are provided by residues 45-52 (GRSNVGKS), 72-76 (GRTQE), 92-95 (DMPG), 159-162 (TKAD), and 193-195 (TSS). Positions 52 and 74 each coordinate Mg(2+).

Belongs to the TRAFAC class TrmE-Era-EngA-EngB-Septin-like GTPase superfamily. EngB GTPase family. It depends on Mg(2+) as a cofactor.

Its function is as follows. Necessary for normal cell division and for the maintenance of normal septation. This chain is Probable GTP-binding protein EngB, found in Bradyrhizobium diazoefficiens (strain JCM 10833 / BCRC 13528 / IAM 13628 / NBRC 14792 / USDA 110).